The following is a 363-amino-acid chain: tRNA/tmRNA (uracil-C(5))-methyltransferase (363 aa).

Residues Gln-187, Tyr-215, Asn-220, Glu-236, and Asp-296 each contribute to the S-adenosyl-L-methionine site. Cys-321 serves as the catalytic Nucleophile. Residue Glu-355 is the Proton acceptor of the active site.

This sequence belongs to the class I-like SAM-binding methyltransferase superfamily. RNA M5U methyltransferase family. TrmA subfamily.

It catalyses the reaction uridine(54) in tRNA + S-adenosyl-L-methionine = 5-methyluridine(54) in tRNA + S-adenosyl-L-homocysteine + H(+). The enzyme catalyses uridine(341) in tmRNA + S-adenosyl-L-methionine = 5-methyluridine(341) in tmRNA + S-adenosyl-L-homocysteine + H(+). In terms of biological role, dual-specificity methyltransferase that catalyzes the formation of 5-methyluridine at position 54 (m5U54) in all tRNAs, and that of position 341 (m5U341) in tmRNA (transfer-mRNA). This is tRNA/tmRNA (uracil-C(5))-methyltransferase from Pseudomonas paraeruginosa (strain DSM 24068 / PA7) (Pseudomonas aeruginosa (strain PA7)).